The following is a 296-amino-acid chain: Small ribosomal subunit biogenesis GTPase RsgA (296 aa).

One can recognise a CP-type G domain in the interval 63 to 224 (RNQLVRPPVA…IADTPGFSSY (162 aa)). GTP is bound by residues 112–115 (SKTD) and 167–175 (GQTGAGKST). Zn(2+)-binding residues include Cys-248, Cys-253, His-255, and Cys-261.

This sequence belongs to the TRAFAC class YlqF/YawG GTPase family. RsgA subfamily. In terms of assembly, monomer. Associates with 30S ribosomal subunit, binds 16S rRNA. It depends on Zn(2+) as a cofactor.

It is found in the cytoplasm. One of several proteins that assist in the late maturation steps of the functional core of the 30S ribosomal subunit. Helps release RbfA from mature subunits. May play a role in the assembly of ribosomal proteins into the subunit. Circularly permuted GTPase that catalyzes slow GTP hydrolysis, GTPase activity is stimulated by the 30S ribosomal subunit. The protein is Small ribosomal subunit biogenesis GTPase RsgA of Limosilactobacillus reuteri (strain DSM 20016) (Lactobacillus reuteri).